We begin with the raw amino-acid sequence, 76 residues long: Small ribosomal subunit protein bS18 (76 aa).

It belongs to the bacterial ribosomal protein bS18 family. Part of the 30S ribosomal subunit. Forms a tight heterodimer with protein bS6.

In terms of biological role, binds as a heterodimer with protein bS6 to the central domain of the 16S rRNA, where it helps stabilize the platform of the 30S subunit. The sequence is that of Small ribosomal subunit protein bS18 from Ectopseudomonas mendocina (strain ymp) (Pseudomonas mendocina).